We begin with the raw amino-acid sequence, 361 residues long: U7 snRNA-associated Sm-like protein LSm11 (361 aa).

The tract at residues 1–26 (MEEREWGARSARAGSPASPPSPRLDV) is disordered. 2 positions are modified to phosphoserine: Ser-15 and Ser-21. The residue at position 41 (Arg-41) is an Omega-N-methylarginine. Residues 67–142 (RTGRGRARGT…QGPGRSKKAP (76 aa)) form a disordered region. Positions 76–96 (TGEPASAGTSTGTSTGAGSSS) are enriched in low complexity. Lys-121 participates in a covalent cross-link: Glycyl lysine isopeptide (Lys-Gly) (interchain with G-Cter in SUMO2). The residue at position 155 (Ser-155) is a Phosphoserine. Residues 155–230 (SPLGELHRCI…LTLTRLFDRL (76 aa)) form the Sm domain. The segment at 172 to 205 (VHIRTFKGLRGVCTGFLVAFDKFWNMALTDVDET) is SM 1. A disordered region spans residues 268-335 (RGDTDRSSHR…RKKKRKPKVD (68 aa)). Residue Ser-281 is modified to Phosphoserine. Polar residues predominate over residues 307 to 323 (GSSVGGTFSRATTLSRG). The interval 344–357 (INQIFIRGENVLLV) is SM 2.

It belongs to the snRNP Sm proteins family. As to quaternary structure, component of the heptameric ring U7 snRNP complex, or U7 Sm protein core complex, at least composed of LSM10, LSM11, SNRPB, SNRPD3, SNRPE, SNRPF, SNRPG and U7 snRNA. Formation of the U7 snRNP is an ATP-dependent process mediated by a specialized SMN complex containing at least the Sm protein core complex and additionally, the U7-specific LSM10 and LSM11 proteins. Identified in a histone pre-mRNA complex, at least composed of ERI1, LSM11, SLBP, SNRPB, SYNCRIP and YBX1. Interacts (via the Sm domains) with CLNS1A. Interacts with PRMT5, SMN, ZNF473 and WDR77. Not methylated.

It is found in the nucleus. Functionally, component of the U7 snRNP complex that is involved in the histone 3'-end pre-mRNA processing. Increases U7 snRNA levels but not histone 3'-end pre-mRNA processing activity, when overexpressed. Required for cell cycle progression from G1 to S phases. Binds specifically to the Sm-binding site of U7 snRNA. The chain is U7 snRNA-associated Sm-like protein LSm11 from Mus musculus (Mouse).